We begin with the raw amino-acid sequence, 182 residues long: Large ribosomal subunit protein bL25 (182 aa).

The protein belongs to the bacterial ribosomal protein bL25 family. CTC subfamily. Part of the 50S ribosomal subunit; part of the 5S rRNA/L5/L18/L25 subcomplex. Contacts the 5S rRNA. Binds to the 5S rRNA independently of L5 and L18.

This is one of the proteins that binds to the 5S RNA in the ribosome where it forms part of the central protuberance. The sequence is that of Large ribosomal subunit protein bL25 from Borrelia duttonii (strain Ly).